A 564-amino-acid chain; its full sequence is Rho guanine nucleotide exchange factor 9 (564 aa).

Residues 8–67 (DSIVSAEAVWDHATMANRELAFKAGDVIKVLDASNKDWWWGQIDDEEGWFPASFVRLWVN) form the SH3 domain. The interval 100 to 110 (RDQMRANVINE) is interaction with GPHN. One can recognise a DH domain in the interval 103–287 (MRANVINEIM…RNVTQQINER (185 aa)). The 108-residue stretch at 318–425 (ELIYTGEMAW…WLRAFREERK (108 aa)) folds into the PH domain. The interval 451–470 (KVPKQKGVNSARSVPPSYPP) is disordered. S502 carries the post-translational modification Phosphoserine.

As to quaternary structure, interacts with GPHN.

The protein localises to the cytoplasm. It localises to the postsynaptic density. Functionally, acts as a guanine nucleotide exchange factor (GEF) for CDC42. Promotes formation of GPHN clusters. This Pongo abelii (Sumatran orangutan) protein is Rho guanine nucleotide exchange factor 9 (ARHGEF9).